The following is a 697-amino-acid chain: Phenoloxidase 1 (697 aa).

A propeptide spans 1-101 (MSDMSGDVVE…PKHQEMATEV (101 aa)) (removed by PPAE1). Cu cation contacts are provided by His-217, His-221, and His-247. Residues Asn-260 and Asn-313 are each glycosylated (N-linked (GlcNAc...) asparagine). Catalysis depends on Glu-355, which acts as the Proton acceptor. Cu cation contacts are provided by His-370, His-374, and His-410. N-linked (GlcNAc...) asparagine glycosylation is found at Asn-498 and Asn-552. Cystine bridges form between Cys-587–Cys-631 and Cys-589–Cys-638.

It belongs to the tyrosinase family. In terms of assembly, heterodimer. Cu(2+) is required as a cofactor. In terms of processing, activated by the cleavage of the N-terminal propeptide by PPAE1. In terms of tissue distribution, expressed in hemocytes.

It is found in the secreted. It catalyses the reaction L-tyrosine + O2 = L-dopaquinone + H2O. The catalysed reaction is 2 L-dopa + O2 = 2 L-dopaquinone + 2 H2O. Its activity is regulated as follows. Activated by a cationic detergent cetyl pyridinium chloride (CPC). Inhibited by phenyl thio-urea (PTU). This is a copper-containing oxidase that functions in the formation of pigments such as melanins and other polyphenolic compounds. Catalyzes the rate-limiting conversions of tyrosine to DOPA, DOPA to DOPA-quinone and possibly 5,6 dihydroxyindole to indole-5'6 quinone. Catalyzes the oxidation of 4-methylcatechol. Binds to the surface of hemocytes and is involved in hemocyte melanization. The protein is Phenoloxidase 1 of Spodoptera litura (Asian cotton leafworm).